Consider the following 37-residue polypeptide: Alpha-conotoxin-like Kn1.2 (37 aa).

Residues 1–15 (ESDGAHAKARADKPA) are compositionally biased toward basic and acidic residues. Positions 1–22 (ESDGAHAKARADKPARSATNRQ) are excised as a propeptide. The disordered stretch occupies residues 1 to 23 (ESDGAHAKARADKPARSATNRQP). 2 cysteine pairs are disulfide-bonded: Cys25–Cys31 and Cys26–Cys36. Cys36 bears the Cysteine amide mark.

It belongs to the conotoxin A superfamily. In terms of tissue distribution, expressed by the venom duct.

It localises to the secreted. Functionally, alpha-conotoxins act on postsynaptic membranes, they bind to the nicotinic acetylcholine receptors (nAChR) and thus inhibit them. This toxin inhibits high voltage-activated (HVA) calcium channel currents in rat DRG neurons (13% inhibition at 1 uM toxin) probably by activating GABA(B) receptors (GABBR1 and/or GABBR2). The protein is Alpha-conotoxin-like Kn1.2 of Conus kinoshitai (Kinoshita's cone).